A 321-amino-acid polypeptide reads, in one-letter code: Cytochrome c biogenesis protein CcsA (321 aa).

The next 8 helical transmembrane spans lie at 17-37 (VVSI…FVGL), 48-68 (TFFC…HLPI), 71-91 (LYES…VPYF), 98-118 (LSTI…WGLL), 143-163 (MVSG…LLVI), 225-245 (ILSI…VWAN), 259-273 (TWAF…IYFH), and 286-306 (AIVA…VNLL).

It belongs to the CcmF/CycK/Ccl1/NrfE/CcsA family. May interact with Ccs1.

The protein localises to the plastid. It localises to the chloroplast thylakoid membrane. In terms of biological role, required during biogenesis of c-type cytochromes (cytochrome c6 and cytochrome f) at the step of heme attachment. The chain is Cytochrome c biogenesis protein CcsA from Populus trichocarpa (Western balsam poplar).